The sequence spans 130 residues: Small ribosomal subunit protein uS8 (130 aa).

Belongs to the universal ribosomal protein uS8 family. As to quaternary structure, part of the 30S ribosomal subunit.

One of the primary rRNA binding proteins, it binds directly to 16S rRNA central domain where it helps coordinate assembly of the platform of the 30S subunit. This is Small ribosomal subunit protein uS8 from Methanoculleus marisnigri (strain ATCC 35101 / DSM 1498 / JR1).